A 293-amino-acid chain; its full sequence is 4-hydroxy-tetrahydrodipicolinate synthase (293 aa).

Thr47 contacts pyruvate. The active-site Proton donor/acceptor is Tyr136. The active-site Schiff-base intermediate with substrate is the Lys164. Ile206 contributes to the pyruvate binding site.

This sequence belongs to the DapA family. Homotetramer; dimer of dimers.

The protein resides in the cytoplasm. The enzyme catalyses L-aspartate 4-semialdehyde + pyruvate = (2S,4S)-4-hydroxy-2,3,4,5-tetrahydrodipicolinate + H2O + H(+). It functions in the pathway amino-acid biosynthesis; L-lysine biosynthesis via DAP pathway; (S)-tetrahydrodipicolinate from L-aspartate: step 3/4. In terms of biological role, catalyzes the condensation of (S)-aspartate-beta-semialdehyde [(S)-ASA] and pyruvate to 4-hydroxy-tetrahydrodipicolinate (HTPA). The sequence is that of 4-hydroxy-tetrahydrodipicolinate synthase from Listeria innocua serovar 6a (strain ATCC BAA-680 / CLIP 11262).